Consider the following 112-residue polypeptide: Nucleoid-associated protein lpg2755 (112 aa).

The protein belongs to the YbaB/EbfC family. As to quaternary structure, homodimer.

It localises to the cytoplasm. It is found in the nucleoid. Functionally, binds to DNA and alters its conformation. May be involved in regulation of gene expression, nucleoid organization and DNA protection. The polypeptide is Nucleoid-associated protein lpg2755 (Legionella pneumophila subsp. pneumophila (strain Philadelphia 1 / ATCC 33152 / DSM 7513)).